Here is a 305-residue protein sequence, read N- to C-terminus: Homoserine O-acetyltransferase (305 aa).

The active-site Acyl-thioester intermediate is Cys142. The substrate site is built by Lys163 and Ser192. Catalysis depends on His235, which acts as the Proton acceptor. The active site involves Glu237. Arg249 is a binding site for substrate.

It belongs to the MetA family.

The protein localises to the cytoplasm. It catalyses the reaction L-homoserine + acetyl-CoA = O-acetyl-L-homoserine + CoA. The protein operates within amino-acid biosynthesis; L-methionine biosynthesis via de novo pathway; O-acetyl-L-homoserine from L-homoserine: step 1/1. Functionally, transfers an acetyl group from acetyl-CoA to L-homoserine, forming acetyl-L-homoserine. The polypeptide is Homoserine O-acetyltransferase (Roseobacter denitrificans (strain ATCC 33942 / OCh 114) (Erythrobacter sp. (strain OCh 114))).